The chain runs to 745 residues: Phosphoribosylformylglycinamidine synthase subunit PurL (745 aa).

Histidine 41 is a catalytic residue. Tyrosine 44 and lysine 83 together coordinate ATP. Glutamate 85 serves as a coordination point for Mg(2+). Residues serine 86–histidine 89 and arginine 108 each bind substrate. The active-site Proton acceptor is the histidine 87. A Mg(2+)-binding site is contributed by aspartate 109. Glutamine 232 is a substrate binding site. Residue aspartate 260 coordinates Mg(2+). Glutamate 304–glutamine 306 lines the substrate pocket. ATP-binding residues include aspartate 494 and glycine 531. Asparagine 532 is a binding site for Mg(2+). Serine 534 provides a ligand contact to substrate.

It belongs to the FGAMS family. As to quaternary structure, monomer. Part of the FGAM synthase complex composed of 1 PurL, 1 PurQ and 2 PurS subunits.

The protein localises to the cytoplasm. It carries out the reaction N(2)-formyl-N(1)-(5-phospho-beta-D-ribosyl)glycinamide + L-glutamine + ATP + H2O = 2-formamido-N(1)-(5-O-phospho-beta-D-ribosyl)acetamidine + L-glutamate + ADP + phosphate + H(+). Its pathway is purine metabolism; IMP biosynthesis via de novo pathway; 5-amino-1-(5-phospho-D-ribosyl)imidazole from N(2)-formyl-N(1)-(5-phospho-D-ribosyl)glycinamide: step 1/2. Functionally, part of the phosphoribosylformylglycinamidine synthase complex involved in the purines biosynthetic pathway. Catalyzes the ATP-dependent conversion of formylglycinamide ribonucleotide (FGAR) and glutamine to yield formylglycinamidine ribonucleotide (FGAM) and glutamate. The FGAM synthase complex is composed of three subunits. PurQ produces an ammonia molecule by converting glutamine to glutamate. PurL transfers the ammonia molecule to FGAR to form FGAM in an ATP-dependent manner. PurS interacts with PurQ and PurL and is thought to assist in the transfer of the ammonia molecule from PurQ to PurL. This Aquifex aeolicus (strain VF5) protein is Phosphoribosylformylglycinamidine synthase subunit PurL.